We begin with the raw amino-acid sequence, 47 residues long: Photosystem II reaction center protein K (47 aa).

The propeptide occupies 1–10 (MAAFTLDLMA). The chain crosses the membrane as a helical span at residues 20 to 40 (APAVDVLPLIPIFFFLLVFVW).

This sequence belongs to the PsbK family. In terms of assembly, PSII is composed of 1 copy each of membrane proteins PsbA, PsbB, PsbC, PsbD, PsbE, PsbF, PsbH, PsbI, PsbJ, PsbK, PsbL, PsbM, PsbT, PsbX, PsbY, Psb30/Ycf12, peripheral proteins PsbO, CyanoQ (PsbQ), PsbU, PsbV and a large number of cofactors. It forms dimeric complexes.

The protein localises to the cellular thylakoid membrane. In terms of biological role, one of the components of the core complex of photosystem II (PSII). PSII is a light-driven water:plastoquinone oxidoreductase that uses light energy to abstract electrons from H(2)O, generating O(2) and a proton gradient subsequently used for ATP formation. It consists of a core antenna complex that captures photons, and an electron transfer chain that converts photonic excitation into a charge separation. The sequence is that of Photosystem II reaction center protein K from Prochlorococcus marinus (strain MIT 9303).